The following is a 473-amino-acid chain: Notchless protein homolog (473 aa).

The ubiquitin-like (UBL) domain stretch occupies residues 9-91 (GKTVMCLLTD…VLTIVYQQQA (83 aa)). 8 WD repeats span residues 107 to 146 (GHAE…PLFT), 149 to 188 (GHKN…LEGS), 192 to 236 (GHKK…SIIC), 239 to 277 (GHTL…LIRE), 313 to 354 (EKQK…QPKK), 358 to 399 (GHQQ…TVFR), 400 to 439 (GHVG…LKQD), and 442 to 473 (GHAD…LWKG). The DWD box signature appears at 417 to 432 (LLSGSKDSTLKIWEIR).

The protein belongs to the NLE1/RSA4 family. As to quaternary structure, associates with the pre-60S ribosomal particle. Constitutively and ubiquitously expressed.

The protein localises to the nucleus. It localises to the nucleolus. Its function is as follows. Required for female gametophyte development. The sequence is that of Notchless protein homolog from Arabidopsis thaliana (Mouse-ear cress).